The following is a 134-amino-acid chain: Replication enhancer protein (134 aa).

It belongs to the geminiviridae replication enhancer protein family. Homooligomer. Interacts with the replication-associated protein (REP). Interacts with host proliferating cell nuclear antigen (PCNA). Interacts with host retinoblastoma-related protein 1 (RBR1), and may thereby deregulate the host cell cycle. Oligomerization and interaction with PCNA are necessary for optimal replication enhancement.

In terms of biological role, increases viral DNA accumulation. Enhances infectivity and symptom expression. The protein is Replication enhancer protein of Nicotiana tabacum (Common tobacco).